Reading from the N-terminus, the 485-residue chain is Glutamyl-tRNA(Gln) amidotransferase subunit A (485 aa).

Catalysis depends on charge relay system residues K74 and S149. S173 functions as the Acyl-ester intermediate in the catalytic mechanism.

The protein belongs to the amidase family. GatA subfamily. As to quaternary structure, heterotrimer of A, B and C subunits.

It catalyses the reaction L-glutamyl-tRNA(Gln) + L-glutamine + ATP + H2O = L-glutaminyl-tRNA(Gln) + L-glutamate + ADP + phosphate + H(+). Its function is as follows. Allows the formation of correctly charged Gln-tRNA(Gln) through the transamidation of misacylated Glu-tRNA(Gln) in organisms which lack glutaminyl-tRNA synthetase. The reaction takes place in the presence of glutamine and ATP through an activated gamma-phospho-Glu-tRNA(Gln). The chain is Glutamyl-tRNA(Gln) amidotransferase subunit A from Synechococcus sp. (strain RCC307).